The primary structure comprises 47 residues: Large ribosomal subunit protein bL34 (47 aa).

Belongs to the bacterial ribosomal protein bL34 family.

The chain is Large ribosomal subunit protein bL34 (rpmH) from Mycolicibacterium smegmatis (strain ATCC 700084 / mc(2)155) (Mycobacterium smegmatis).